The primary structure comprises 355 residues: Capsular polysaccharide biosynthesis glycosyltransferase CapH (355 aa).

Belongs to the glycosyltransferase group 1 family. Glycosyltransferase 4 subfamily.

Its pathway is capsule biogenesis; capsule polysaccharide biosynthesis. Its function is as follows. Required for the biosynthesis of type 1 capsular polysaccharide. This chain is Capsular polysaccharide biosynthesis glycosyltransferase CapH (capH), found in Staphylococcus aureus.